The sequence spans 467 residues: Tyrosine phenol-lyase (467 aa).

Lys-268 bears the N6-(pyridoxal phosphate)lysine mark.

Belongs to the beta-eliminating lyase family. Homotetramer. Pyridoxal 5'-phosphate serves as cofactor.

It carries out the reaction L-tyrosine + H2O = phenol + pyruvate + NH4(+). This chain is Tyrosine phenol-lyase, found in Nostoc punctiforme (strain ATCC 29133 / PCC 73102).